We begin with the raw amino-acid sequence, 1121 residues long: Phosphatidylinositol 4-kinase beta 1 (1121 aa).

Positions 1-143 (MPMGRFLSLV…SRIQEKCQIA (143 aa)) constitute a PIK helical domain. Polar residues predominate over residues 187–207 (PPTQKSLSFSPSPGTNVQDDG). The disordered stretch occupies residues 187–210 (PPTQKSLSFSPSPGTNVQDDGSQL). A run of 9 repeats spans residues 212 to 231 (AEDNKIFKKLIPSPKVRDAL), 244 to 263 (SEKEGFFKRLLRDSKGEGDE), 266 to 285 (PNSEGFFKRLLKDNKSEDED), 288 to 306 (NSSEGFFKRLLSSKGESEE), 309 to 328 (SSSDGLFKRLLRDNKGDEEE), 331 to 350 (ANSDSFFKRLLRESKNEDEE), 353 to 372 (PNSEGFFKKLFRDSKPEDDK), 380 to 398 (EDKDGFLKKLFREKNDDKR), and 420 to 438 (DEREGFFKKFFKEKSDDKK). Residues 212-508 (AEDNKIFKKL…FRDRDQSVED (297 aa)) form an 11 X 20 AA approximate repeats (PPC) region. Disordered regions lie at residues 343-421 (ESKN…EEDE), 435-489 (DDKK…ESSP), 506-544 (VEDSELFGSKKHKEKRPGSPKQRDDTPSGKPPLPNNTAS), and 794-825 (AAAAKGEAPPGLPLKGAGQDSSDAQPRANGGM). 4 stretches are compositionally biased toward basic and acidic residues: residues 358–376 (FFKKLFRDSKPEDDKVPKE), 383–405 (DGFLKKLFREKNDDKRHGSEKNE), 412–421 (ADKKSGEEDE), and 435–445 (DDKKDIVKVDD). Positions 446–455 (GNESEGDESP) are enriched in acidic residues. Phosphoserine occurs at positions 449 and 454. Repeat copies occupy residues 454 to 472 (SPEFSLFKRLFRIHPEDAK) and 489 to 508 (PGTENFFRKLFRDRDQSVED). Residues 466–475 (IHPEDAKPTS) show a composition bias toward basic and acidic residues. Polar residues predominate over residues 476–489 (ENENSSNGLVESSP). A PI3K/PI4K catalytic domain is found at 835–1106 (ELWEGKRDRI…LISSSLDAWR (272 aa)). The tract at residues 841–847 (RDRIRKA) is G-loop. Positions 969 to 977 (QVKDRHNGN) are catalytic loop. The interval 988–1012 (HIDFGFMLSNSPGGVNFESAPFKLT) is activation loop.

It belongs to the PI3/PI4-kinase family. Type III PI4K subfamily. In terms of assembly, interacts with AHK2, CBL1 and RABA4D. Expressed constitutively in leaves, roots, flowers, and stems.

The protein resides in the cell membrane. It localises to the golgi apparatus. The protein localises to the trans-Golgi network. Its subcellular location is the cytoplasmic vesicle membrane. It carries out the reaction a 1,2-diacyl-sn-glycero-3-phospho-(1D-myo-inositol) + ATP = a 1,2-diacyl-sn-glycero-3-phospho-(1D-myo-inositol 4-phosphate) + ADP + H(+). With respect to regulation, stimulated by phosphatidylinositol 4-phosphate (PtdIns4P). Slightly repressed by phosphatidyl-choline (PtdCho), wortmannin and adenosine. Its function is as follows. Acts on phosphatidylinositol (PtdIns) in the first committed step in the production of the second messenger inositol-1,4,5-trisphosphate. Necessary for proper organization of the trans-Golgi network (TGN) and post-Golgi secretion in root hairs. Together with PI4KB2, required during polarized root hair expansion and pollen tube elongation. Functions redundantly with PI4KB2 upstream of the cold response phosphoinositide-dependent phospholipase C (PI-PLC) pathway. This chain is Phosphatidylinositol 4-kinase beta 1, found in Arabidopsis thaliana (Mouse-ear cress).